The sequence spans 147 residues: Hemoglobin subunit epsilon (147 aa).

The region spanning 3 to 147 (HFTAEEKAAV…VAIALAHKYH (145 aa)) is the Globin domain. Phosphoserine occurs at positions 14 and 51. Heme b-binding residues include His-64 and His-93.

Belongs to the globin family. Heterotetramer of two alpha chains and two epsilon chains in early embryonic hemoglobin Gower-2; two zeta chains and two epsilon chains in early embryonic hemoglobin Gower-1. Red blood cells.

Functionally, the epsilon chain is a beta-type chain of early mammalian embryonic hemoglobin. The chain is Hemoglobin subunit epsilon (HBE1) from Pongo pygmaeus (Bornean orangutan).